We begin with the raw amino-acid sequence, 514 residues long: JmjC domain-containing histone demethylation protein 1 (514 aa).

A PHD-type zinc finger spans residues 4 to 62 (IDTCPICVESPLEDSTTFNNIAWLQCDICNQWFHASCLKIPKIEVNNLHSYHCEGCSKS). In terms of domain architecture, JmjC spans 220–384 (SDVDSFGKSF…MHLRIYEIEK (165 aa)). Threonine 267 is a substrate binding site. Fe cation-binding residues include histidine 270 and aspartate 272. Substrate is bound at residue lysine 287. Residue histidine 352 coordinates Fe cation. Residues 432-454 (KSEAHSRGEVHTKTETHAVKDEP) are compositionally biased toward basic and acidic residues. The disordered stretch occupies residues 432-456 (KSEAHSRGEVHTKTETHAVKDEPQP).

It belongs to the JHDM1 histone demethylase family. Fe(2+) serves as cofactor.

The protein resides in the nucleus. It catalyses the reaction N(6),N(6)-dimethyl-L-lysyl(36)-[histone H3] + 2 2-oxoglutarate + 2 O2 = L-lysyl(36)-[histone H3] + 2 formaldehyde + 2 succinate + 2 CO2. Its function is as follows. Histone demethylase that specifically demethylates 'Lys-36' of histone H3, thereby playing a central role in histone code. In Debaryomyces hansenii (strain ATCC 36239 / CBS 767 / BCRC 21394 / JCM 1990 / NBRC 0083 / IGC 2968) (Yeast), this protein is JmjC domain-containing histone demethylation protein 1 (JHD1).